A 101-amino-acid polypeptide reads, in one-letter code: Small ribosomal subunit protein uS14 (101 aa).

Belongs to the universal ribosomal protein uS14 family. In terms of assembly, part of the 30S ribosomal subunit. Contacts proteins S3 and S10.

In terms of biological role, binds 16S rRNA, required for the assembly of 30S particles and may also be responsible for determining the conformation of the 16S rRNA at the A site. The polypeptide is Small ribosomal subunit protein uS14 (Shewanella denitrificans (strain OS217 / ATCC BAA-1090 / DSM 15013)).